The following is a 266-amino-acid chain: tRNA pseudouridine synthase A (266 aa).

The active-site Nucleophile is Asp52. Substrate is bound at residue Tyr113.

The protein belongs to the tRNA pseudouridine synthase TruA family. Homodimer.

The enzyme catalyses uridine(38/39/40) in tRNA = pseudouridine(38/39/40) in tRNA. Its function is as follows. Formation of pseudouridine at positions 38, 39 and 40 in the anticodon stem and loop of transfer RNAs. The chain is tRNA pseudouridine synthase A from Agrobacterium fabrum (strain C58 / ATCC 33970) (Agrobacterium tumefaciens (strain C58)).